The primary structure comprises 488 residues: Long chain base biosynthesis protein 2a (488 aa).

The chain crosses the membrane as a helical span at residues 4 to 24; it reads LPYTTALTTLFSYGLLFAFGQ. Residue Lys-311 is modified to N6-(pyridoxal phosphate)lysine.

Belongs to the class-II pyridoxal-phosphate-dependent aminotransferase family. As to quaternary structure, heterodimer with LCB1. Component of the serine palmitoyltransferase (SPT) complex, composed of LCB1 and LCB2. Pyridoxal 5'-phosphate is required as a cofactor.

It localises to the endoplasmic reticulum membrane. The catalysed reaction is L-serine + hexadecanoyl-CoA + H(+) = 3-oxosphinganine + CO2 + CoA. It participates in lipid metabolism; sphingolipid metabolism. Serine palmitoyltransferase (SPT). The heterodimer formed with LCB1 constitutes the catalytic core. This is Long chain base biosynthesis protein 2a from Oryza sativa subsp. japonica (Rice).